The sequence spans 266 residues: Signal peptidase I (266 aa).

The Cytoplasmic segment spans residues methionine 1 to serine 20. The chain crosses the membrane as a helical span at residues phenylalanine 21 to valine 41. Topologically, residues proline 42–glutamate 266 are periplasmic. Residues serine 45 and lysine 108 contribute to the active site.

Belongs to the peptidase S26 family.

The protein resides in the cell inner membrane. The catalysed reaction is Cleavage of hydrophobic, N-terminal signal or leader sequences from secreted and periplasmic proteins.. This Rickettsia felis (strain ATCC VR-1525 / URRWXCal2) (Rickettsia azadi) protein is Signal peptidase I (lepB).